Reading from the N-terminus, the 350-residue chain is tRNA uridine(34) hydroxylase (350 aa).

The Rhodanese domain maps to 146–240; it reads DDPDALFIDM…YARKAREQGL (95 aa). The active-site Cysteine persulfide intermediate is cysteine 200.

The protein belongs to the TrhO family.

It catalyses the reaction uridine(34) in tRNA + AH2 + O2 = 5-hydroxyuridine(34) in tRNA + A + H2O. Catalyzes oxygen-dependent 5-hydroxyuridine (ho5U) modification at position 34 in tRNAs, the first step in 5-carboxymethoxyuridine (cmo5U) biosynthesis. May be part of an alternate pathway, which is able to bypass cmo5U biogenesis in a subset of tRNAs under aerobic conditions. This is tRNA uridine(34) hydroxylase from Escherichia coli O45:K1 (strain S88 / ExPEC).